A 449-amino-acid polypeptide reads, in one-letter code: Heterogeneous nuclear ribonucleoprotein H (449 aa).

Position 1 is an N-acetylmethionine; in Heterogeneous nuclear ribonucleoprotein H; alternate (Met1). The residue at position 2 (Met2) is an N-acetylmethionine; in Heterogeneous nuclear ribonucleoprotein H, N-terminally processed. The RRM 1 domain maps to 11 to 90; it reads FVVKVRGLPW…RYVEVFKSNN (80 aa). Phosphoserine is present on Ser23. Lys35 participates in a covalent cross-link: Glycyl lysine isopeptide (Lys-Gly) (interchain with G-Cter in SUMO2). Residues Ser54 and Ser63 each carry the phosphoserine modification. Residues Lys87 and Lys98 each participate in a glycyl lysine isopeptide (Lys-Gly) (interchain with G-Cter in SUMO2) cross-link. Residues 111 to 188 enclose the RRM 2 domain; it reads GFVRLRGLPF…RYIEIFKSSR (78 aa). The residue at position 233 (Arg233) is a Dimethylated arginine; alternate. At Arg233 the chain carries Omega-N-methylarginine; alternate. A 1-1 repeat occupies 234 to 249; the sequence is GAYGGGYGGYDDYNGY. The tract at residues 234-433 is 2 X 16 AA Gly-rich approximate repeats; the sequence is GAYGGGYGGY…YGGQSSMSGY (200 aa). Tyr246 is subject to Phosphotyrosine. The region spanning 289-364 is the RRM 3 domain; it reads HCVHMRGLPY…RYVELFLNST (76 aa). At Ser310 the chain carries Phosphoserine. 3 repeat units span residues 354 to 372, 374 to 392, and 418 to 433. Residues 354–392 form a 2 X 19 AA perfect repeats region; the sequence is HRYVELFLNSTAGASGGAYEHRYVELFLNSTAGASGGAY.

In terms of assembly, part of a ternary complex containing FUBP2, PTBP1, PTBP2 and HNRNPH1. Identified in the spliceosome C complex. Interacts with IGF2BP1. Interacts with CUGBP1; the interaction is RNA-dependent. Interacts with MBNL1; the interaction in RNA-independent. As to expression, expressed ubiquitously.

Its subcellular location is the nucleus. It is found in the nucleoplasm. This protein is a component of the heterogeneous nuclear ribonucleoprotein (hnRNP) complexes which provide the substrate for the processing events that pre-mRNAs undergo before becoming functional, translatable mRNAs in the cytoplasm. Mediates pre-mRNA alternative splicing regulation. Inhibits, together with CUGBP1, insulin receptor (IR) pre-mRNA exon 11 inclusion in myoblast. Binds to the IR RNA. Binds poly(RG). This Homo sapiens (Human) protein is Heterogeneous nuclear ribonucleoprotein H (HNRNPH1).